The sequence spans 138 residues: Small ribosomal subunit protein uS12 (138 aa).

Residues 33–55 (KEHTNVSSPQKRGVCTRVGTMTP) form a disordered region. Position 102 is a 3-methylthioaspartic acid (aspartate 102).

Belongs to the universal ribosomal protein uS12 family. In terms of assembly, part of the 30S ribosomal subunit. Contacts proteins S8 and S17. May interact with IF1 in the 30S initiation complex.

With S4 and S5 plays an important role in translational accuracy. In terms of biological role, interacts with and stabilizes bases of the 16S rRNA that are involved in tRNA selection in the A site and with the mRNA backbone. Located at the interface of the 30S and 50S subunits, it traverses the body of the 30S subunit contacting proteins on the other side and probably holding the rRNA structure together. The combined cluster of proteins S8, S12 and S17 appears to hold together the shoulder and platform of the 30S subunit. The protein is Small ribosomal subunit protein uS12 of Bacillus velezensis (strain DSM 23117 / BGSC 10A6 / LMG 26770 / FZB42) (Bacillus amyloliquefaciens subsp. plantarum).